A 248-amino-acid chain; its full sequence is Phosphomannomutase (248 aa).

Residue Asp-12 is the Nucleophile of the active site. 2 residues coordinate Mg(2+): Asp-12 and Asp-14. The active-site Proton donor/acceptor is the Asp-14. Alpha-D-mannose 1-phosphate-binding residues include Arg-21, Arg-123, Arg-134, Arg-141, Ser-179, and Asp-181. Mg(2+) is bound by residues Asp-207, Phe-219, and Thr-224.

It belongs to the eukaryotic PMM family. As to quaternary structure, homodimer. Requires Mg(2+) as cofactor.

The protein resides in the cytoplasm. It carries out the reaction alpha-D-mannose 1-phosphate = D-mannose 6-phosphate. It functions in the pathway nucleotide-sugar biosynthesis; GDP-alpha-D-mannose biosynthesis; alpha-D-mannose 1-phosphate from D-fructose 6-phosphate: step 2/2. In terms of biological role, catalyzes the interconversion of mannose-6-phosphate to mannose-1-phosphate, the precursor for the synthesis of GDP-mannose. GDP-mannose is an essential sugar nucleotide for the synthesis of D-mannose-containing cell wall polysaccharides (galactomannans and glucomannans), glycolipids, glycoproteins and the antioxidant L-ascorbate. This Spinacia oleracea (Spinach) protein is Phosphomannomutase.